A 236-amino-acid polypeptide reads, in one-letter code: 28 kDa antigen (236 aa).

The first 22 residues, 1–22 (MPNRRRCKLSTAISTVATLAIA), serve as a signal peptide directing secretion. The tract at residues 76–105 (PVPSLTGTDDPGNGLRTPGLTSPDLTNQEL) is disordered. Residues 94–105 (GLTSPDLTNQEL) are compositionally biased toward polar residues.

The protein to M.tuberculosis ERP.

This chain is 28 kDa antigen, found in Mycobacterium leprae (strain TN).